The primary structure comprises 235 residues: Small ribosomal subunit protein uS5 (235 aa).

One can recognise an S5 DRBM domain in the interval 60–123 (ENQEVLDIAL…NYAKMNIIEI (64 aa)). Zn(2+) contacts are provided by Cys-127, Cys-132, Cys-134, and His-138.

It belongs to the universal ribosomal protein uS5 family. In terms of assembly, part of the 30S ribosomal subunit. Contacts protein S4. It depends on Zn(2+) as a cofactor.

In terms of biological role, with S4 and S12 plays an important role in translational accuracy. The polypeptide is Small ribosomal subunit protein uS5 (Thermococcus kodakarensis (strain ATCC BAA-918 / JCM 12380 / KOD1) (Pyrococcus kodakaraensis (strain KOD1))).